A 289-amino-acid polypeptide reads, in one-letter code: Iodotyrosine deiodinase 1 (289 aa).

The chain crosses the membrane as a helical span at residues 1-21 (MYFLTPILVAILCILVVWIFK). A compositionally biased stretch (basic and acidic residues) spans 47 to 58 (DLKDSSDLHQAE). The segment at 47–69 (DLKDSSDLHQAEEDADEWQESEE) is disordered. Residues 59-69 (EDADEWQESEE) are compositionally biased toward acidic residues. FMN is bound by residues 100-104 (RRSVR), Ser128, and 128-129 (SG). 3,5-diiodo-L-tyrosine contacts are provided by Ala130, Glu157, Tyr161, and Lys182. 3-iodo-L-tyrosine is bound by residues Ala130, Glu157, Tyr161, and Lys182. FMN is bound by residues 237–239 (TTT) and Arg279.

It belongs to the nitroreductase family. As to quaternary structure, homodimer. The cofactor is FMN.

It localises to the cell membrane. Its subcellular location is the cytoplasmic vesicle membrane. It catalyses the reaction 2 iodide + L-tyrosine + 2 NADP(+) = 3,5-diiodo-L-tyrosine + 2 NADPH + H(+). The enzyme catalyses iodide + L-tyrosine + NADP(+) = 3-iodo-L-tyrosine + NADPH. It carries out the reaction 3-iodo-L-tyrosine + iodide + NADP(+) = 3,5-diiodo-L-tyrosine + NADPH + H(+). The catalysed reaction is L-tyrosine + chloride + NADP(+) = 3-chloro-L-tyrosine + NADPH. It catalyses the reaction bromide + L-tyrosine + NADP(+) = 3-bromo-L-tyrosine + NADPH. Functionally, catalyzes the dehalogenation of halotyrosines such as 3-bromo-L-tyrosine, 3-chloro-L-tyrosine, 3-iodo-L-tyrosine and 3,5-diiodo-L-tyrosine. During thyroid hormone biosynthesis, facilitates iodide salvage by catalysing the oxidative NADPH-dependent deiodination of the halogenated by-products of thyroid hormone production, monoiodotyrosine (L-MIT) and diiodotyrosine (L-DIT). The scavanged iodide can then reenter the hormone-producing pathways. Acts more efficiently on 3-iodo-L-tyrosine than 3,5-diiodo-L-tyrosine. This Pongo abelii (Sumatran orangutan) protein is Iodotyrosine deiodinase 1 (IYD).